The following is a 313-amino-acid chain: Extracellular metalloprotease (313 aa).

A signal peptide spans 1–34; the sequence is MKLVPRFRKQWFAYLTVLCLALAAAVSFGVPAKA. The segment at 35–74 is disordered; that stretch reads AENPQTSVSNTGKEADATKNQTSKADQVSAPYEGTGKTSK. Residues 35-93 constitute a propeptide that is removed on maturation; the sequence is AENPQTSVSNTGKEADATKNQTSKADQVSAPYEGTGKTSKSLYGGQTELEKNIQTLQPS. A compositionally biased stretch (polar residues) spans 37 to 60; the sequence is NPQTSVSNTGKEADATKNQTSKAD. Cys131 and Cys147 are oxidised to a cystine. Active-site charge relay system residues include His146 and Ser267.

This sequence belongs to the peptidase S1B family. In terms of assembly, monomer.

Its subcellular location is the secreted. The polypeptide is Extracellular metalloprotease (mpr) (Bacillus subtilis (strain 168)).